The primary structure comprises 489 residues: Glutamate--tRNA ligase (489 aa).

The short motif at 12–22 is the 'HIGH' region element; the sequence is PSPTGIPHVGM. Positions 256–260 match the 'KMSKS' region motif; that stretch reads KLSKR. An ATP-binding site is contributed by lysine 259.

It belongs to the class-I aminoacyl-tRNA synthetase family. Glutamate--tRNA ligase type 1 subfamily. Monomer.

It is found in the cytoplasm. It carries out the reaction tRNA(Glu) + L-glutamate + ATP = L-glutamyl-tRNA(Glu) + AMP + diphosphate. Catalyzes the attachment of glutamate to tRNA(Glu) in a two-step reaction: glutamate is first activated by ATP to form Glu-AMP and then transferred to the acceptor end of tRNA(Glu). This Mycobacterium ulcerans (strain Agy99) protein is Glutamate--tRNA ligase.